The following is a 100-amino-acid chain: Small ribosomal subunit protein uS14c (100 aa).

The protein belongs to the universal ribosomal protein uS14 family. In terms of assembly, part of the 30S ribosomal subunit.

It localises to the plastid. Its subcellular location is the chloroplast. Its function is as follows. Binds 16S rRNA, required for the assembly of 30S particles. This Oedogonium cardiacum (Filamentous green alga) protein is Small ribosomal subunit protein uS14c.